A 123-amino-acid chain; its full sequence is Small ribosomal subunit protein uS17 (123 aa).

It belongs to the universal ribosomal protein uS17 family. In terms of assembly, part of the 30S ribosomal subunit.

Its function is as follows. One of the primary rRNA binding proteins, it binds specifically to the 5'-end of 16S ribosomal RNA. In Pyrobaculum aerophilum (strain ATCC 51768 / DSM 7523 / JCM 9630 / CIP 104966 / NBRC 100827 / IM2), this protein is Small ribosomal subunit protein uS17.